The primary structure comprises 269 residues: Eukaryotic translation initiation factor 3 subunit G-1 (269 aa).

In terms of domain architecture, RRM spans 188–266 (AAIRISNLSE…LILSVEWSKP (79 aa)).

It belongs to the eIF-3 subunit G family. As to quaternary structure, component of the eukaryotic translation initiation factor 3 (eIF-3) complex. The eIF-3 complex interacts with pix.

Its subcellular location is the cytoplasm. In terms of biological role, RNA-binding component of the eukaryotic translation initiation factor 3 (eIF-3) complex, which is involved in protein synthesis of a specialized repertoire of mRNAs and, together with other initiation factors, stimulates binding of mRNA and methionyl-tRNAi to the 40S ribosome. The eIF-3 complex specifically targets and initiates translation of a subset of mRNAs involved in cell proliferation. This subunit can bind 18S rRNA. The chain is Eukaryotic translation initiation factor 3 subunit G-1 from Drosophila mojavensis (Fruit fly).